The sequence spans 531 residues: Acyl-CoA ligase azaF (531 aa).

188–199 (RLFSSGTTGLPK) lines the AMP pocket. Positions 449-525 (EVEGVLRNHP…DAIPRNASGK (77 aa)) are AMP-binding.

This sequence belongs to the ATP-dependent AMP-binding enzyme family.

It functions in the pathway secondary metabolite biosynthesis. Its function is as follows. Acyl-CoA ligase; part of the gene cluster that mediates the biosynthesis of azaphilones, a class of fungal metabolites characterized by a highly oxygenated pyrano-quinone bicyclic core and exhibiting a broad range of bioactivities. In the first step, the non-reducing polyketide synthase azaA forms the hexaketide precursor from successive condensations of five malonyl-CoA units, presumably with a simple acetyl-CoA starter unit. The reactive polyketide chain then undergoes a PT-mediated C2-C7 cyclization to afford the aromatic ring and is eventually released as an aldehyde through the R-domain. The putative ketoreductase azaE is proposed to catalyze the reduction of the terminal ketone resulting in the early culture product FK17-P2a. The monooxygenase azaH was demonstrated to be the only enzyme required to convert FK17-P2a to azanigerone E. AzaH first hydroxylates the benzaldehyde intermediate FK17-P2a at C4, which triggers the formation of the pyran-ring to afford azanigerone E. In parallel, the 2,4-dimethylhexanoyl chain is synthesized by the HR-PKS azaB and is proposed to be transferred to the C4-hydroxyl of azanigerone E by the acyltransferase azaD directly from the ACP domain of azaB. Alternatively, the 2,4-dimethyl-hexanoyl chain may be offloaded from the HR-PKS as a carboxylic acid and converted to an acyl-CoA by azaF. The resulting acyl-CoA molecule could then be taken up as a substrate by AzaD to form azanigerone B. To yield the carboxylic acid substituent in azanigerone A, the hydroxypropyl side chain of azanigerone B would need to undergo a C-C oxidative cleavage catalyzed by cytochrome P450 AzaI. AzaI is proposed to act on a vicinal diol that leads to a C-C bond scission either through an alkoxyradical intermediate or a peroxy complex. In the biosynthesis of azanigerone A, azanigerone B first undergoes hydroxylation at C10, possibly catalyzed by one of the two FAD-dependent monooxygenases encoded in the cluster, azaG or azaL, resulting in the vicinal diol azanigerone C. Oxidative cleavage of azanigerone C by azaI would yield the corresponding aldehyde derivative of azanigerone A. Finally, the dehydrogenase azaJ is proposed to convert the aldehyde functional group into the carboxylic acid, completing the conversion from azanigerone B to azanigerone A. Alternatively, the oxidation of aldehyde to carboxylic acid may be catalyzed by the same P450 enzyme azaI via consecutive oxidation or by endogenous alcohol dehydrogenase. The chain is Acyl-CoA ligase azaF from Aspergillus niger (strain ATCC 1015 / CBS 113.46 / FGSC A1144 / LSHB Ac4 / NCTC 3858a / NRRL 328 / USDA 3528.7).